The following is a 258-amino-acid chain: Peptidase inhibitor 15 (258 aa).

Residues 1 to 21 (MTIIAAISCVFLFSILCETSA) form the signal peptide. The propeptide occupies 22 to 60 (LVLPNSTDLLLSNNNFTDIETALAAHLDSAKIPKARRKR). 3 N-linked (GlcNAc...) asparagine glycosylation sites follow: asparagine 26, asparagine 36, and asparagine 124. In terms of domain architecture, SCP spans 71–211 (LDYHNQVRGK…RRAVYLVCNY (141 aa)).

This sequence belongs to the CRISP family.

It is found in the secreted. Functionally, serine protease inhibitor which displays weak inhibitory activity against trypsin. May play a role in facial patterning during embryonic development. The protein is Peptidase inhibitor 15 (PI15) of Gallus gallus (Chicken).